Reading from the N-terminus, the 242-residue chain is UDP-2,3-diacylglucosamine hydrolase (242 aa).

Mn(2+) contacts are provided by Asp8, His10, Asp41, Asn79, and His114. 79–80 (NR) contacts substrate. Residues Asp122, Lys164, Lys167, and His195 each coordinate substrate. 2 residues coordinate Mn(2+): His195 and His197.

It belongs to the LpxH family. It depends on Mn(2+) as a cofactor.

Its subcellular location is the cell inner membrane. It carries out the reaction UDP-2-N,3-O-bis[(3R)-3-hydroxytetradecanoyl]-alpha-D-glucosamine + H2O = 2-N,3-O-bis[(3R)-3-hydroxytetradecanoyl]-alpha-D-glucosaminyl 1-phosphate + UMP + 2 H(+). It functions in the pathway glycolipid biosynthesis; lipid IV(A) biosynthesis; lipid IV(A) from (3R)-3-hydroxytetradecanoyl-[acyl-carrier-protein] and UDP-N-acetyl-alpha-D-glucosamine: step 4/6. Functionally, hydrolyzes the pyrophosphate bond of UDP-2,3-diacylglucosamine to yield 2,3-diacylglucosamine 1-phosphate (lipid X) and UMP by catalyzing the attack of water at the alpha-P atom. Involved in the biosynthesis of lipid A, a phosphorylated glycolipid that anchors the lipopolysaccharide to the outer membrane of the cell. This is UDP-2,3-diacylglucosamine hydrolase from Vibrio cholerae serotype O1 (strain ATCC 39315 / El Tor Inaba N16961).